The chain runs to 219 residues: Proteasome subunit beta 2 (219 aa).

The propeptide at 1–25 (MAEWIAGGLEGPAGRGLDERVVRSG) is removed in mature form; by autocatalysis. Thr26 serves as the catalytic Nucleophile.

It belongs to the peptidase T1B family. As to quaternary structure, the 20S proteasome core is composed of 14 alpha and 14 beta subunits that assemble into four stacked heptameric rings, resulting in a barrel-shaped structure. The two inner rings, each composed of seven catalytic beta subunits, are sandwiched by two outer rings, each composed of seven alpha subunits. The catalytic chamber with the active sites is on the inside of the barrel. Has a gated structure, the ends of the cylinder being occluded by the N-termini of the alpha-subunits. Is capped at one or both ends by the proteasome regulatory ATPase, PAN.

The protein localises to the cytoplasm. It catalyses the reaction Cleavage of peptide bonds with very broad specificity.. With respect to regulation, the formation of the proteasomal ATPase PAN-20S proteasome complex, via the docking of the C-termini of PAN into the intersubunit pockets in the alpha-rings, triggers opening of the gate for substrate entry. Interconversion between the open-gate and close-gate conformations leads to a dynamic regulation of the 20S proteasome proteolysis activity. Component of the proteasome core, a large protease complex with broad specificity involved in protein degradation. The polypeptide is Proteasome subunit beta 2 (Aeropyrum pernix (strain ATCC 700893 / DSM 11879 / JCM 9820 / NBRC 100138 / K1)).